The sequence spans 114 residues: Ribonuclease P protein component (114 aa).

The protein belongs to the RnpA family. Consists of a catalytic RNA component (M1 or rnpB) and a protein subunit.

The enzyme catalyses Endonucleolytic cleavage of RNA, removing 5'-extranucleotides from tRNA precursor.. RNaseP catalyzes the removal of the 5'-leader sequence from pre-tRNA to produce the mature 5'-terminus. It can also cleave other RNA substrates such as 4.5S RNA. The protein component plays an auxiliary but essential role in vivo by binding to the 5'-leader sequence and broadening the substrate specificity of the ribozyme. This is Ribonuclease P protein component from Legionella pneumophila (strain Paris).